The primary structure comprises 485 residues: Aspartyl/glutamyl-tRNA(Asn/Gln) amidotransferase subunit B (485 aa).

Belongs to the GatB/GatE family. GatB subfamily. As to quaternary structure, heterotrimer of A, B and C subunits.

The enzyme catalyses L-glutamyl-tRNA(Gln) + L-glutamine + ATP + H2O = L-glutaminyl-tRNA(Gln) + L-glutamate + ADP + phosphate + H(+). The catalysed reaction is L-aspartyl-tRNA(Asn) + L-glutamine + ATP + H2O = L-asparaginyl-tRNA(Asn) + L-glutamate + ADP + phosphate + 2 H(+). Its function is as follows. Allows the formation of correctly charged Asn-tRNA(Asn) or Gln-tRNA(Gln) through the transamidation of misacylated Asp-tRNA(Asn) or Glu-tRNA(Gln) in organisms which lack either or both of asparaginyl-tRNA or glutaminyl-tRNA synthetases. The reaction takes place in the presence of glutamine and ATP through an activated phospho-Asp-tRNA(Asn) or phospho-Glu-tRNA(Gln). In Bordetella petrii (strain ATCC BAA-461 / DSM 12804 / CCUG 43448), this protein is Aspartyl/glutamyl-tRNA(Asn/Gln) amidotransferase subunit B.